Here is a 492-residue protein sequence, read N- to C-terminus: Pyrin and HIN domain-containing protein 1 (492 aa).

The 88-residue stretch at 1–88 (MANNYKKIVL…AETLKREKLK (88 aa)) folds into the Pyrin domain. Disordered stretches follow at residues 106–199 (KTKQ…KPLA) and 400–492 (KNTN…PAVP). Positions 142–159 (PSEEETGTKRSKMSKEQT) are enriched in basic and acidic residues. The segment covering 160–173 (RPSCSAGASTSTAM) has biased composition (polar residues). Residues 181–194 (TSSSAPPNTSSTES) are compositionally biased toward low complexity. The region spanning 199 to 399 (ANRHATASKN…SEMHSFIQIQ (201 aa)) is the HIN-200 domain. Polar residues-rich tracts occupy residues 416–432 (QEQSQHPKPSEASTTLP) and 460–492 (GAQSSPANFRITSPTVAPPLSSDTSTNRHPAVP).

Belongs to the HIN-200 family. In terms of assembly, interacts with MDM2. Expressed in spleen, lymph node and peripheral blood leukocytes, and at lower levels in thymus, bone marrow and fetal liver. Down-regulated in breast tumors.

The protein resides in the nucleus. It localises to the nucleoplasm. The protein localises to the nucleus speckle. Major mediator of the tumor suppressor activity of IFN in breast cancer cells. Promotes ubiquitination and subsequent degradation of MDM2, which leads to p53/TP53 stabilization. Promotes ubiquitination and subsequent degradation of HDAC1, which in turn enhances maspin expression, and impairs invasive activity of cancer cells. The polypeptide is Pyrin and HIN domain-containing protein 1 (PYHIN1) (Homo sapiens (Human)).